We begin with the raw amino-acid sequence, 396 residues long: ATP-dependent RNA helicase eIF4A (396 aa).

The Q motif motif lies at 22–50 (HKFDELKLKEVLLRGIYGYGFVDPSAIQQ). Residues 53–223 (ILPIIEGHDV…DKFMNKPVRI (171 aa)) form the Helicase ATP-binding domain. 66–73 (AQSGTGKT) serves as a coordination point for ATP. Positions 171–174 (DEAD) match the DEAD box motif. A Helicase C-terminal domain is found at 234–395 (GIQQYYINVE…ELPANIADLF (162 aa)).

The protein belongs to the DEAD box helicase family. eIF4A subfamily. In terms of assembly, component of the eIF4F complex, which composition varies with external and internal environmental conditions. It is composed of at least eIF4A, eIF4E and eIF4G.

The protein resides in the cytoplasm. It catalyses the reaction ATP + H2O = ADP + phosphate + H(+). Functionally, ATP-dependent RNA helicase which is a subunit of the eIF4F complex involved in cap recognition and is required for mRNA binding to ribosome. In the current model of translation initiation, eIF4A unwinds RNA secondary structures in the 5'-UTR of mRNAs which is necessary to allow efficient binding of the small ribosomal subunit, and subsequent scanning for the initiator codon. In Eremothecium gossypii (strain ATCC 10895 / CBS 109.51 / FGSC 9923 / NRRL Y-1056) (Yeast), this protein is ATP-dependent RNA helicase eIF4A (TIF1).